The sequence spans 359 residues: 3-dehydroquinate synthase (359 aa).

NAD(+) is bound by residues 72 to 77, 106 to 110, 130 to 131, Lys143, Lys152, and 170 to 173; these read EGEIHK, GVIGD, TS, and CLKT. Residues Glu185, His248, and His264 each coordinate Zn(2+).

It belongs to the sugar phosphate cyclases superfamily. Dehydroquinate synthase family. Co(2+) serves as cofactor. Zn(2+) is required as a cofactor. Requires NAD(+) as cofactor.

The protein resides in the cytoplasm. It catalyses the reaction 7-phospho-2-dehydro-3-deoxy-D-arabino-heptonate = 3-dehydroquinate + phosphate. It functions in the pathway metabolic intermediate biosynthesis; chorismate biosynthesis; chorismate from D-erythrose 4-phosphate and phosphoenolpyruvate: step 2/7. Catalyzes the conversion of 3-deoxy-D-arabino-heptulosonate 7-phosphate (DAHP) to dehydroquinate (DHQ). In Dehalococcoides mccartyi (strain ATCC BAA-2266 / KCTC 15142 / 195) (Dehalococcoides ethenogenes (strain 195)), this protein is 3-dehydroquinate synthase.